A 171-amino-acid chain; its full sequence is UPF0398 protein M6_Spy1399 (171 aa).

It belongs to the UPF0398 family.

The protein is UPF0398 protein M6_Spy1399 of Streptococcus pyogenes serotype M6 (strain ATCC BAA-946 / MGAS10394).